The sequence spans 95 residues: Large ribosomal subunit protein bL27 (95 aa).

Residues 1 to 6 constitute a propeptide that is removed on maturation; it reads MFLQLF.

The protein belongs to the bacterial ribosomal protein bL27 family. In terms of processing, the N-terminus is cleaved by ribosomal processing cysteine protease Prp.

This Symbiobacterium thermophilum (strain DSM 24528 / JCM 14929 / IAM 14863 / T) protein is Large ribosomal subunit protein bL27.